Consider the following 385-residue polypeptide: MNPVPAQREYFLDSIRAWLMLLGIPFHISLIYSSHTWHVNSAESSLWLTLFNDFIHSFRMQVFFVISGYFSYMLFLRYPLKKWWKVRVERVGIPMLTAIPLLTLPQFIMLQYVKGKAESWPGLSLYDKYNTLAWELISHLWFLLVLVVMTTLCVWIFKRIRNNLENSDKTNKKFSMVKLSVIFLCLGIGYAVIRRTIFIVYPPILSNGMFNFIVMQTLFYLPFFILGALAFIFPHLKALFTTPSRGCTLAAALAFVAYLLNQRYGSGDAWMYETESVITMVLGLWMVNVVFSFGHRLLNFQSARVTYFVNASLFIYLVHHPLTLFFGAYITPHITSNWLGFLCGLIFVVGIAIILYEIHLRIPLLKFLFSGKPVVKRENDKAPAR.

Transmembrane regions (helical) follow at residues 17 to 37 (AWLM…SHTW), 60 to 80 (MQVF…RYPL), 91 to 111 (VGIP…IMLQ), 137 to 157 (ISHL…VWIF), 173 to 193 (KFSM…YAVI), 212 to 232 (FIVM…LAFI), 239 to 259 (LFTT…VAYL), 274 to 294 (TESV…FSFG), 311 to 331 (ASLF…AYIT), and 338 to 358 (WLGF…LYEI).

The protein belongs to the acyltransferase 3 family. OpgC subfamily.

The protein localises to the cell membrane. Its pathway is glycan metabolism; osmoregulated periplasmic glucan (OPG) biosynthesis. Necessary for the succinyl substitution of periplasmic glucans. Could catalyze the transfer of succinyl residues from the cytoplasmic side of the membrane to the nascent glucan backbones on the periplasmic side of the membrane. This chain is Glucans biosynthesis protein C, found in Escherichia coli (strain K12 / MC4100 / BW2952).